The chain runs to 251 residues: Probable transcriptional regulatory protein cbdbA400 (251 aa).

Belongs to the TACO1 family.

It localises to the cytoplasm. In Dehalococcoides mccartyi (strain CBDB1), this protein is Probable transcriptional regulatory protein cbdbA400.